Here is a 293-residue protein sequence, read N- to C-terminus: sn-glycerol-3-phosphate transport system permease protein UgpA (293 aa).

The next 6 helical transmembrane spans lie at 10-30 (ILPY…FFWP), 72-92 (VTVV…LLLA), 108-128 (LLIW…LFMF), 155-177 (AMGL…FFVA), 204-224 (IVFP…TVYA), and 261-281 (LGSS…LTAF). One can recognise an ABC transmembrane type-1 domain in the interval 66–282 (YLHSVQVTVV…AIVIALTAFQ (217 aa)).

The protein belongs to the binding-protein-dependent transport system permease family. As to quaternary structure, the complex is composed of two ATP-binding proteins (UgpC), two transmembrane proteins (UgpA and UgpE) and a solute-binding protein (UgpB).

The protein resides in the cell inner membrane. Its function is as follows. Part of the ABC transporter complex UgpBAEC involved in sn-glycerol-3-phosphate (G3P) import. Probably responsible for the translocation of the substrate across the membrane. This is sn-glycerol-3-phosphate transport system permease protein UgpA (ugpA) from Brucella suis biovar 1 (strain 1330).